Here is a 587-residue protein sequence, read N- to C-terminus: Dynein axonemal intermediate chain 2 (587 aa).

WD repeat units lie at residues 214–254 (RPAS…NPVE), 261–302 (SHRD…EPTE), 362–401 (GHHG…SSIM), and 405–445 (YHTS…NNPS). Disordered stretches follow at residues 519–542 (LKER…DMKE) and 562–587 (KEQQ…IVHE).

This sequence belongs to the dynein intermediate chain family. In terms of assembly, consists of at least two heavy chains and a number of intermediate and light chains. Interacts with DNAAF2. Interacts with DNAAF6/PIH1D3. Interacts with HEATR2; probably involved in outer arm dynein assembly. Interacts with C16ORF71/DAAP1.

The protein resides in the cytoplasm. It is found in the cytoskeleton. Its subcellular location is the cilium axoneme. It localises to the dynein axonemal particle. In terms of biological role, part of the dynein complex of multiciliated cell cilia. The protein is Dynein axonemal intermediate chain 2 (dnai2) of Xenopus laevis (African clawed frog).